A 124-amino-acid chain; its full sequence is MAAAMTFYRLLNRWGEAARSLRLGARCFGVRVSPTGEKVTHTGQVYDDKDYRRIRFVGRQKEVNENFAIDLIAEQPVSEVETRVIACDGGGGALGHPKVYINLDKETKTGTCGYCGLQFRQHHH.

Residues M1–F28 constitute a mitochondrion transit peptide. K98 is modified (N6-acetyllysine).

It belongs to the complex I NDUFS6 subunit family. In terms of assembly, mammalian complex I is composed of 45 different subunits. This is a component of the iron-sulfur (IP) fragment of the enzyme.

The protein localises to the mitochondrion inner membrane. Its function is as follows. Accessory subunit of the mitochondrial membrane respiratory chain NADH dehydrogenase (Complex I), that is believed not to be involved in catalysis. Complex I functions in the transfer of electrons from NADH to the respiratory chain. The immediate electron acceptor for the enzyme is believed to be ubiquinone. This chain is NADH dehydrogenase [ubiquinone] iron-sulfur protein 6, mitochondrial (NDUFS6), found in Pongo pygmaeus (Bornean orangutan).